The sequence spans 164 residues: MFNIVLVEPEIPPNTGNVIRLAANTGCRLHLVEPLGFSMDDKHMRRAGLDYHEYAQVLRHASWQALLDSQRPPAGRLFAMTTHGAGSVYDMRFLPGDWLVFGAETRGLAPDVRESFPMAQRLRVPMQPGQRSLNLSNTVAVTVFEAWRQNGFAGSHHPAAADQG.

S-adenosyl-L-methionine is bound by residues Met80, Gly102, Val124, and Ser132.

This sequence belongs to the class IV-like SAM-binding methyltransferase superfamily. RNA methyltransferase TrmH family. TrmL subfamily. Homodimer.

The protein localises to the cytoplasm. The enzyme catalyses cytidine(34) in tRNA + S-adenosyl-L-methionine = 2'-O-methylcytidine(34) in tRNA + S-adenosyl-L-homocysteine + H(+). The catalysed reaction is 5-carboxymethylaminomethyluridine(34) in tRNA(Leu) + S-adenosyl-L-methionine = 5-carboxymethylaminomethyl-2'-O-methyluridine(34) in tRNA(Leu) + S-adenosyl-L-homocysteine + H(+). Methylates the ribose at the nucleotide 34 wobble position in the two leucyl isoacceptors tRNA(Leu)(CmAA) and tRNA(Leu)(cmnm5UmAA). Catalyzes the methyl transfer from S-adenosyl-L-methionine to the 2'-OH of the wobble nucleotide. In Polaromonas sp. (strain JS666 / ATCC BAA-500), this protein is tRNA (cytidine(34)-2'-O)-methyltransferase.